Consider the following 268-residue polypeptide: Ribosomal RNA large subunit methyltransferase E (268 aa).

The interval 1-60 (MKPPRSRSGSSKDTGPKRIPGKALKSASNPGENDATLDSATARTARNKTVSLRTARGRTT) is disordered. The span at 26 to 52 (SASNPGENDATLDSATARTARNKTVSL) shows a compositional bias: polar residues. S-adenosyl-L-methionine is bound by residues Gly115, Trp117, Asp133, Asp149, and Asp173. Catalysis depends on Lys213, which acts as the Proton acceptor.

Belongs to the class I-like SAM-binding methyltransferase superfamily. RNA methyltransferase RlmE family.

It is found in the cytoplasm. The enzyme catalyses uridine(2552) in 23S rRNA + S-adenosyl-L-methionine = 2'-O-methyluridine(2552) in 23S rRNA + S-adenosyl-L-homocysteine + H(+). Functionally, specifically methylates the uridine in position 2552 of 23S rRNA at the 2'-O position of the ribose in the fully assembled 50S ribosomal subunit. In Gluconobacter oxydans (strain 621H) (Gluconobacter suboxydans), this protein is Ribosomal RNA large subunit methyltransferase E.